Reading from the N-terminus, the 500-residue chain is Adenylosuccinate synthetase, chloroplastic (500 aa).

Residues 87 to 93 and 115 to 117 each bind GTP; these read GDEGKGK and GHT. D88 (proton acceptor) is an active-site residue. 2 residues coordinate Mg(2+): D88 and G115. IMP is bound by residues 88 to 91, 113 to 116, T205, R219, Q299, T314, and R378; these read DEGK and NAGH. The active-site Proton donor is H116. 374 to 380 is a binding site for substrate; that stretch reads TTTGRPR. Residues R380, 406–408, and 489–491 contribute to the GTP site; these read KLD and GIG.

Belongs to the adenylosuccinate synthetase family. Homodimer. The cofactor is Mg(2+).

Its subcellular location is the plastid. The protein resides in the chloroplast. The enzyme catalyses IMP + L-aspartate + GTP = N(6)-(1,2-dicarboxyethyl)-AMP + GDP + phosphate + 2 H(+). It functions in the pathway purine metabolism; AMP biosynthesis via de novo pathway; AMP from IMP: step 1/2. Its function is as follows. Plays an important role in the de novo pathway and in the salvage pathway of purine nucleotide biosynthesis. Catalyzes the first committed step in the biosynthesis of AMP from IMP. This is Adenylosuccinate synthetase, chloroplastic from Solanum bulbocastanum (Wild potato).